Here is a 211-residue protein sequence, read N- to C-terminus: Thymidylate kinase (211 aa).

Position 11 to 18 (11 to 18 (GPDGAGKT)) interacts with ATP.

The protein belongs to the thymidylate kinase family.

The catalysed reaction is dTMP + ATP = dTDP + ADP. Phosphorylation of dTMP to form dTDP in both de novo and salvage pathways of dTTP synthesis. This chain is Thymidylate kinase, found in Streptococcus pyogenes serotype M49 (strain NZ131).